Consider the following 355-residue polypeptide: 12-oxophytodienoate reductase-like protein (355 aa).

Residues 30 to 32, Ala-63, and Gln-105 each bind FMN; that span reads ALT. 175–178 contacts substrate; it reads NASS. Residue Tyr-181 is the Proton donor of the active site. Substrate is bound at residue Arg-265. FMN-binding positions include Gly-288 and 309–310; that span reads GR.

Belongs to the NADH:flavin oxidoreductase/NADH oxidase family. Requires FMN as cofactor. In terms of tissue distribution, weakly expressed in flowers and roots.

The protein localises to the cytoplasm. In terms of biological role, may be involved in the biosynthesis or metabolism of oxylipin signaling molecules. This Solanum lycopersicum (Tomato) protein is 12-oxophytodienoate reductase-like protein (OPR2).